The chain runs to 275 residues: Ribosomal protein L11 methyltransferase (275 aa).

4 residues coordinate S-adenosyl-L-methionine: Thr130, Gly151, Asp172, and Asn213.

Belongs to the methyltransferase superfamily. PrmA family.

The protein resides in the cytoplasm. The enzyme catalyses L-lysyl-[protein] + 3 S-adenosyl-L-methionine = N(6),N(6),N(6)-trimethyl-L-lysyl-[protein] + 3 S-adenosyl-L-homocysteine + 3 H(+). Its function is as follows. Methylates ribosomal protein L11. This is Ribosomal protein L11 methyltransferase from Wolinella succinogenes (strain ATCC 29543 / DSM 1740 / CCUG 13145 / JCM 31913 / LMG 7466 / NCTC 11488 / FDC 602W) (Vibrio succinogenes).